A 369-amino-acid chain; its full sequence is Carbamoyl phosphate synthase small chain (369 aa).

A CPSase region spans residues 1-168; it reads MYGILVLEDG…KKVVKYPAKD (168 aa). The L-glutamine site is built by Ser-45, Gly-220, and Gly-222. In terms of domain architecture, Glutamine amidotransferase type-1 spans 172–364; the sequence is SCVVIDCGVK…VALGMKFKQE (193 aa). Catalysis depends on Cys-247, which acts as the Nucleophile. Residues Leu-248, Gln-251, Asn-289, Gly-291, and Phe-292 each coordinate L-glutamine. Catalysis depends on residues His-337 and Glu-339.

It belongs to the CarA family. Composed of two chains; the small (or glutamine) chain promotes the hydrolysis of glutamine to ammonia, which is used by the large (or ammonia) chain to synthesize carbamoyl phosphate. Tetramer of heterodimers (alpha,beta)4.

The catalysed reaction is hydrogencarbonate + L-glutamine + 2 ATP + H2O = carbamoyl phosphate + L-glutamate + 2 ADP + phosphate + 2 H(+). It carries out the reaction L-glutamine + H2O = L-glutamate + NH4(+). Its pathway is amino-acid biosynthesis; L-arginine biosynthesis; carbamoyl phosphate from bicarbonate: step 1/1. It participates in pyrimidine metabolism; UMP biosynthesis via de novo pathway; (S)-dihydroorotate from bicarbonate: step 1/3. In terms of biological role, small subunit of the glutamine-dependent carbamoyl phosphate synthetase (CPSase). CPSase catalyzes the formation of carbamoyl phosphate from the ammonia moiety of glutamine, carbonate, and phosphate donated by ATP, constituting the first step of 2 biosynthetic pathways, one leading to arginine and/or urea and the other to pyrimidine nucleotides. The small subunit (glutamine amidotransferase) binds and cleaves glutamine to supply the large subunit with the substrate ammonia. The protein is Carbamoyl phosphate synthase small chain of Methanococcus vannielii (strain ATCC 35089 / DSM 1224 / JCM 13029 / OCM 148 / SB).